We begin with the raw amino-acid sequence, 393 residues long: DNA polymerase processivity factor (393 aa).

Disordered regions lie at residues 25-50 (EMERGSRDHHRDHRDHREHRETREPP), 311-339 (ESRFERMGKQDDGKGDRSHKNDDGSALAS), and 355-393 (KNGTAGSSLFNEKEDSESDDSMHFDYSSNPNPKRQRCVV). Positions 31-41 (RDHHRDHRDHR) are enriched in basic residues. The segment covering 311–333 (ESRFERMGKQDDGKGDRSHKNDD) has biased composition (basic and acidic residues).

Belongs to the herpesviridae polymerase accessory protein family.

In terms of biological role, accessory subunit of the DNA polymerase that acts to increase the processivity of polymerization. The protein is DNA polymerase processivity factor (U27) of Human herpesvirus 6A (strain Uganda-1102) (HHV-6 variant A).